We begin with the raw amino-acid sequence, 446 residues long: Phosphoglucosamine mutase (446 aa).

Serine 88 serves as the catalytic Phosphoserine intermediate. Residues serine 88, aspartate 231, aspartate 233, and aspartate 235 each coordinate Mg(2+). Serine 88 carries the phosphoserine modification.

Belongs to the phosphohexose mutase family. The cofactor is Mg(2+). Post-translationally, activated by phosphorylation.

The catalysed reaction is alpha-D-glucosamine 1-phosphate = D-glucosamine 6-phosphate. Catalyzes the conversion of glucosamine-6-phosphate to glucosamine-1-phosphate. This is Phosphoglucosamine mutase from Methanococcus vannielii (strain ATCC 35089 / DSM 1224 / JCM 13029 / OCM 148 / SB).